The sequence spans 426 residues: Glutamate-1-semialdehyde 2,1-aminomutase (426 aa).

An N6-(pyridoxal phosphate)lysine modification is found at K265.

It belongs to the class-III pyridoxal-phosphate-dependent aminotransferase family. HemL subfamily. Homodimer. Requires pyridoxal 5'-phosphate as cofactor.

It localises to the cytoplasm. The enzyme catalyses (S)-4-amino-5-oxopentanoate = 5-aminolevulinate. The protein operates within porphyrin-containing compound metabolism; protoporphyrin-IX biosynthesis; 5-aminolevulinate from L-glutamyl-tRNA(Glu): step 2/2. The protein is Glutamate-1-semialdehyde 2,1-aminomutase of Erwinia tasmaniensis (strain DSM 17950 / CFBP 7177 / CIP 109463 / NCPPB 4357 / Et1/99).